The sequence spans 322 residues: tRNA dimethylallyltransferase (322 aa).

19 to 26 (GPTASGKT) contributes to the ATP binding site. 21-26 (TASGKT) is a substrate binding site. Interaction with substrate tRNA stretches follow at residues 44–47 (DSAL), 168–172 (QRIQR), and 255–260 (RCVGYR).

The protein belongs to the IPP transferase family. As to quaternary structure, monomer. Requires Mg(2+) as cofactor.

It catalyses the reaction adenosine(37) in tRNA + dimethylallyl diphosphate = N(6)-dimethylallyladenosine(37) in tRNA + diphosphate. Functionally, catalyzes the transfer of a dimethylallyl group onto the adenine at position 37 in tRNAs that read codons beginning with uridine, leading to the formation of N6-(dimethylallyl)adenosine (i(6)A). This Cupriavidus necator (strain ATCC 17699 / DSM 428 / KCTC 22496 / NCIMB 10442 / H16 / Stanier 337) (Ralstonia eutropha) protein is tRNA dimethylallyltransferase.